Consider the following 339-residue polypeptide: MGSLLFSWKGTQQKDVTIKSDAPDTLLLEKHADYIASYGSKKDDYEYCMSEYLRMSGVYWGLTVMDLMGQLHRMNREEILVFIKSCQHECGGISASIGHDPHLLYTLSAVQILTLYDSVHVINVDKVVAYVQSLQKEDGSFAGDIWGEIDTRFSFCAVATLALLGKLDAINVEKAIEFVLSCMNFDGGFGCRPGSESHAGQIYCCTGFLAITSQLHQVNSDLLGWWLCERQLPSGGLNGRPEKLPDVCYSWWVLASLKIIGRLHWIDREKLRSFILACQDEETGGFADRPGDMVDPFHTLFGIAGLSLLGEEQIKPVSPVFCMPEEVLQRVNVQPELVS.

T11 carries the post-translational modification Phosphothreonine. PFTB repeat units lie at residues 28–69 (LEKH…DLMG), 76–117 (REEI…TLYD), 124–165 (VDKV…ALLG), 172–213 (VEKA…AITS), 220–261 (SDLL…KIIG), and 268–310 (REKL…SLLG). Geranylgeranyl diphosphate-binding positions include 198 to 200 (HAG) and 240 to 243 (RPEK). 2 residues coordinate Zn(2+): D246 and C248. Geranylgeranyl diphosphate is bound by residues Y249 and 249-252 (YSWW). H298 contributes to the Zn(2+) binding site.

This sequence belongs to the protein prenyltransferase subunit beta family. As to quaternary structure, heterotrimer composed of RABGGTA, RABGGTB and CHM; within this trimer, RABGGTA and RABGGTB form the catalytic component B, while CHM (component A) mediates peptide substrate binding. The Rab GGTase dimer (RGGT) interacts with CHM (component A) prior to Rab protein binding; the association is stabilized by geranylgeranyl pyrophosphate (GGpp). The CHM:RGGT:Rab complex is destabilized by GGpp. Interaction of RABGGTB with prenylated PTP4A2 precludes its association with RABGGTA and inhibits enzyme activity. Interacts with CHODL. Interacts with non-phosphorylated form of RAB8A; phosphorylation of RAB8A at 'Thr-72' disrupts this interaction. Zn(2+) serves as cofactor. As to expression, ubiquitous. Detected in all the major organs in adult animals.

The catalysed reaction is geranylgeranyl diphosphate + L-cysteinyl-[protein] = S-geranylgeranyl-L-cysteinyl-[protein] + diphosphate. With respect to regulation, the enzymatic reaction requires the aid of a Rab escort protein (also called component A), such as CHM. Functionally, catalyzes the transfer of a geranylgeranyl moiety from geranylgeranyl diphosphate to both cysteines of Rab proteins with the C-terminal sequence -XXCC, -XCXC and -CCXX, such as RAB1A, RAB3A, RAB5A and RAB7A. This chain is Geranylgeranyl transferase type-2 subunit beta (Rabggtb), found in Mus musculus (Mouse).